A 255-amino-acid chain; its full sequence is Hydroxyacylglutathione hydrolase (255 aa).

Residues histidine 56, histidine 58, aspartate 60, histidine 61, histidine 114, aspartate 133, and histidine 171 each contribute to the Zn(2+) site.

Belongs to the metallo-beta-lactamase superfamily. Glyoxalase II family. In terms of assembly, monomer. The cofactor is Zn(2+).

It catalyses the reaction an S-(2-hydroxyacyl)glutathione + H2O = a 2-hydroxy carboxylate + glutathione + H(+). Its pathway is secondary metabolite metabolism; methylglyoxal degradation; (R)-lactate from methylglyoxal: step 2/2. Functionally, thiolesterase that catalyzes the hydrolysis of S-D-lactoyl-glutathione to form glutathione and D-lactic acid. The chain is Hydroxyacylglutathione hydrolase from Fuscovulum blasticum (Rhodobacter blasticus).